A 330-amino-acid chain; its full sequence is Fructose-1,6-bisphosphatase class 1 (330 aa).

4 residues coordinate Mg(2+): glutamate 84, aspartate 103, leucine 105, and aspartate 106. Residues 106–109, asparagine 196, and lysine 262 each bind substrate; that span reads DGSS. Mg(2+) is bound at residue glutamate 268.

It belongs to the FBPase class 1 family. Homotetramer. It depends on Mg(2+) as a cofactor.

It localises to the cytoplasm. The catalysed reaction is beta-D-fructose 1,6-bisphosphate + H2O = beta-D-fructose 6-phosphate + phosphate. It participates in carbohydrate biosynthesis; gluconeogenesis. The chain is Fructose-1,6-bisphosphatase class 1 from Shewanella putrefaciens (strain CN-32 / ATCC BAA-453).